A 199-amino-acid polypeptide reads, in one-letter code: VKFDIKNQCGYTVWAAGLPGGGKEFDQGQTWTVNLAAGTASARFWGRTGCTFDASGKGSCRSGDCGGQLSCTVSGAVPATLAEYTQSDQDYYDVSLVDGFNIPLAINPTNTKCTAPACKADINAVCPSELKVDGGCNSACNVLQTDQYCCRNAYVNNCPATNYSKIFKNQCPQAYSYAKDDTATFACASGTDYSIVFCP.

8 disulfides stabilise this stretch: Cys-9/Cys-198, Cys-50/Cys-60, Cys-65/Cys-71, Cys-113/Cys-187, Cys-118/Cys-171, Cys-126/Cys-136, Cys-140/Cys-149, and Cys-150/Cys-158.

Belongs to the thaumatin family. In terms of tissue distribution, expressed in pollen.

Its subcellular location is the secreted. It localises to the extracellular space. It is found in the extracellular matrix. The protein localises to the pollen coat. The protein resides in the cytoplasm. Its subcellular location is the nucleus. It localises to the mitochondrion. It is found in the endoplasmic reticulum. The protein localises to the golgi apparatus. The protein resides in the golgi stack. Its subcellular location is the vesicle. It localises to the vacuole. This is Pathogenesis-related 5 protein Cup a 3 from Hesperocyparis arizonica (Arizona cypress).